We begin with the raw amino-acid sequence, 228 residues long: Venom allergen 5 (228 aa).

An N-terminal signal peptide occupies residues 1–22 (MTKIDLLARVFVIATIIALATA). 3 disulfides stabilise this stretch: Cys-30–Cys-124, Cys-51–Cys-117, and Cys-195–Cys-212. Residues 69–214 (KEHNDYGHKV…WNKHFLVCNY (146 aa)) enclose the SCP domain.

The protein belongs to the CRISP family. Venom allergen 5-like subfamily. Expressed by the venom gland.

The protein resides in the secreted. This is Venom allergen 5 from Rhynchium brunneum (Potter wasp).